We begin with the raw amino-acid sequence, 142 residues long: Nucleoside diphosphate kinase (142 aa).

6 residues coordinate ATP: Lys9, Phe57, Arg85, Thr91, Arg102, and Asn112. Residues 87–106 (AMGATDPAKSEKGTVRGDLG) are disordered. The Pros-phosphohistidine intermediate role is filled by His115.

Belongs to the NDK family. As to quaternary structure, homotetramer. Mg(2+) serves as cofactor.

Its subcellular location is the cytoplasm. It carries out the reaction a 2'-deoxyribonucleoside 5'-diphosphate + ATP = a 2'-deoxyribonucleoside 5'-triphosphate + ADP. It catalyses the reaction a ribonucleoside 5'-diphosphate + ATP = a ribonucleoside 5'-triphosphate + ADP. In terms of biological role, major role in the synthesis of nucleoside triphosphates other than ATP. The ATP gamma phosphate is transferred to the NDP beta phosphate via a ping-pong mechanism, using a phosphorylated active-site intermediate. This Dehalococcoides mccartyi (strain ATCC BAA-2266 / KCTC 15142 / 195) (Dehalococcoides ethenogenes (strain 195)) protein is Nucleoside diphosphate kinase.